A 155-amino-acid chain; its full sequence is MSKVLEQVEAIVTPITDELQLELVDIAFEKEGPNWFLRIFIDKDGGVDIDECAAVSEKVSEKMDENDPITQNYFLEVSSPGAERPLKKEQDFENAVSKYVHVTSYEPIDGRKMWEGTLVSYDGTTLVITITDKTRKITCEIPKDKVAKARLAIQF.

This sequence belongs to the RimP family.

The protein localises to the cytoplasm. Required for maturation of 30S ribosomal subunits. The protein is Ribosome maturation factor RimP of Listeria monocytogenes serotype 4b (strain CLIP80459).